Reading from the N-terminus, the 860-residue chain is DNA mismatch repair protein MutS (860 aa).

An ATP-binding site is contributed by 625–632; it reads GPNMGGKS.

This sequence belongs to the DNA mismatch repair MutS family.

In terms of biological role, this protein is involved in the repair of mismatches in DNA. It is possible that it carries out the mismatch recognition step. This protein has a weak ATPase activity. The protein is DNA mismatch repair protein MutS of Aeromonas hydrophila subsp. hydrophila (strain ATCC 7966 / DSM 30187 / BCRC 13018 / CCUG 14551 / JCM 1027 / KCTC 2358 / NCIMB 9240 / NCTC 8049).